Reading from the N-terminus, the 133-residue chain is Small ribosomal subunit protein uS8 (133 aa).

It belongs to the universal ribosomal protein uS8 family. In terms of assembly, part of the 30S ribosomal subunit. Contacts proteins S5 and S12.

One of the primary rRNA binding proteins, it binds directly to 16S rRNA central domain where it helps coordinate assembly of the platform of the 30S subunit. This Prochlorococcus marinus (strain MIT 9215) protein is Small ribosomal subunit protein uS8.